We begin with the raw amino-acid sequence, 215 residues long: Small ribosomal subunit protein uS3 (215 aa).

The KH type-2 domain occupies 39 to 107; sequence VRQYLQKRLA…PVHINIEEIR (69 aa).

The protein belongs to the universal ribosomal protein uS3 family. Part of the 30S ribosomal subunit. Forms a tight complex with proteins S10 and S14.

Its function is as follows. Binds the lower part of the 30S subunit head. Binds mRNA in the 70S ribosome, positioning it for translation. In Nitrosomonas eutropha (strain DSM 101675 / C91 / Nm57), this protein is Small ribosomal subunit protein uS3.